Consider the following 164-residue polypeptide: C-type natriuretic peptide (164 aa).

The N-terminal stretch at 1–23 (MVASRLAAGGLLLLALLALALDG) is a signal peptide. Disordered regions lie at residues 24–93 (KPAP…AAAA) and 115–134 (HPEHHAGGGGGGGGGGGASR). A propeptide spanning residues 24 to 142 (KPAPPQPLRK…SRRLKGVAKK (119 aa)) is cleaved from the precursor. The span at 58 to 67 (AGGGGGGGRS) shows a compositional bias: gly residues. The span at 68-93 (GSKAANAAPTAPKSKGGAAAAAAAAA) shows a compositional bias: low complexity. Residues 121–132 (GGGGGGGGGGGA) are compositionally biased toward gly residues. Residues Cys-148 and Cys-164 are joined by a disulfide bond.

It belongs to the natriuretic peptide family. As to expression, expressed by the venom gland.

It is found in the secreted. Functionally, snake venom natriuretic peptide that has a vasorelaxant activity in rat aortic strips and a diuretic potency in anesthetized rats. May act by activating natriuretic receptors (NPR1 and/or NPR2). The polypeptide is C-type natriuretic peptide (Philodryas olfersii (Green snake)).